The chain runs to 142 residues: Peptide methionine sulfoxide reductase MsrB (142 aa).

The region spanning 3 to 126 (KEELKKKLSP…NSAALRFIPF (124 aa)) is the MsrB domain. Residue Cys-115 is the Nucleophile of the active site.

The protein belongs to the MsrB Met sulfoxide reductase family.

The enzyme catalyses L-methionyl-[protein] + [thioredoxin]-disulfide + H2O = L-methionyl-(R)-S-oxide-[protein] + [thioredoxin]-dithiol. This is Peptide methionine sulfoxide reductase MsrB from Lactococcus lactis subsp. cremoris (strain MG1363).